The sequence spans 131 residues: uncharacterized protein (131 aa).

Residues 99–131 (NAIQEEEIDMEQQEEKEEKPREKGKKKSVEEEF) form a disordered region. A compositionally biased stretch (acidic residues) spans 102–113 (QEEEIDMEQQEE). Positions 114-131 (KEEKPREKGKKKSVEEEF) are enriched in basic and acidic residues.

This is an uncharacterized protein from Sulfolobus islandicus rod-shaped virus 1 (SIRV-1).